The chain runs to 375 residues: Actin-related protein T1 (375 aa).

The protein belongs to the actin family.

The protein resides in the cytoplasm. The protein localises to the cytoskeleton. It localises to the nucleus. It is found in the cytoplasmic vesicle. Its subcellular location is the secretory vesicle. The protein resides in the acrosome. Functionally, negatively regulates the Hedgehog (SHH) signaling. Binds to the promoter of the SHH signaling mediator, GLI1, and inhibits its expression. In Macaca fascicularis (Crab-eating macaque), this protein is Actin-related protein T1 (ACTRT1).